The primary structure comprises 316 residues: MKPYYWESQHGNFGDDLNLWLWDFLLPGFREVYPETLLVGVGTVLNRALLPKATHKLVIGSGFGYGTLPDMSDPKEWDIRSVRGPLTAAKVGVAPELGIIDPAVMVADLPEFQGLRKIYKRSFVPHWESAIAGLWPAICDAVGLNYIDPRGEAKDVIRKIGQSELIVAESMHGAILADAFRVPWTAVSTSHSINSFKWNDWAQTLGVTYRPRRVPVSTRAEAMIKGARFWGMDFQAKEPQPEDPNRRQIDGDLAVAEREPRQTSLRAAAKRALAAPATLALWQASRAAPQLSKDSALAERKERFRTVLDGIRRDYF.

It functions in the pathway glycan metabolism; exopolysaccharide biosynthesis. The polypeptide is Succinoglycan biosynthesis protein ExoV (exoV) (Rhizobium meliloti (strain 1021) (Ensifer meliloti)).